The sequence spans 266 residues: Putative peptidyl-prolyl cis-trans isomerase NifM (266 aa).

Residues 124 to 221 (PEQRLTRHLL…LGWHLLWCEA (98 aa)) enclose the PpiC domain.

This sequence belongs to the PpiC/parvulin rotamase family.

The catalysed reaction is [protein]-peptidylproline (omega=180) = [protein]-peptidylproline (omega=0). In terms of biological role, required for the activation and stabilization of the iron-component (NifH) of nitrogenase. Probable PPIase. This is Putative peptidyl-prolyl cis-trans isomerase NifM (nifM) from Klebsiella oxytoca.